The chain runs to 183 residues: Nascent polypeptide-associated complex subunit beta (183 aa).

An NAC-A/B domain is found at 62–127; the sequence is GADDKKLQTT…GEEKELTELV (66 aa). Residues 150–183 are disordered; that stretch reads QNMQKQAGTEGKKDEDEDDIPDLVEGENFESNVE. Positions 164-183 are enriched in acidic residues; the sequence is EDEDDIPDLVEGENFESNVE.

The protein belongs to the NAC-beta family. Part of the nascent polypeptide-associated complex (NAC), consisting of egd2 and egd1. NAC associates with ribosomes via egd1.

The protein localises to the cytoplasm. It is found in the nucleus. Component of the nascent polypeptide-associated complex (NAC), a dynamic component of the ribosomal exit tunnel, protecting the emerging polypeptides from interaction with other cytoplasmic proteins to ensure appropriate nascent protein targeting. The NAC complex also promotes mitochondrial protein import by enhancing productive ribosome interactions with the outer mitochondrial membrane and blocks the inappropriate interaction of ribosomes translating non-secretory nascent polypeptides with translocation sites in the membrane of the endoplasmic reticulum. EGD1 may act as a transcription factor that exert a negative effect on the expression of several genes that are transcribed by RNA polymerase II. The chain is Nascent polypeptide-associated complex subunit beta (egd1) from Neosartorya fischeri (strain ATCC 1020 / DSM 3700 / CBS 544.65 / FGSC A1164 / JCM 1740 / NRRL 181 / WB 181) (Aspergillus fischerianus).